The sequence spans 374 residues: Homoserine O-acetyltransferase (374 aa).

An AB hydrolase-1 domain is found at 45-353 (NAILVLHALT…PYGHDAFLIE (309 aa)). Serine 151 (nucleophile) is an active-site residue. Arginine 220 serves as a coordination point for substrate. Residues aspartate 314 and histidine 347 contribute to the active site. Position 348 (aspartate 348) interacts with substrate.

It belongs to the AB hydrolase superfamily. MetX family. In terms of assembly, homodimer.

The protein resides in the cytoplasm. It carries out the reaction L-homoserine + acetyl-CoA = O-acetyl-L-homoserine + CoA. The protein operates within amino-acid biosynthesis; L-methionine biosynthesis via de novo pathway; O-acetyl-L-homoserine from L-homoserine: step 1/1. Its function is as follows. Transfers an acetyl group from acetyl-CoA to L-homoserine, forming acetyl-L-homoserine. The protein is Homoserine O-acetyltransferase of Moorella thermoacetica (strain ATCC 39073 / JCM 9320).